The sequence spans 275 residues: NH(3)-dependent NAD(+) synthetase (275 aa).

Residue 46–53 (GISGGQDS) participates in ATP binding. Asp-52 is a binding site for Mg(2+). Arg-140 contributes to the deamido-NAD(+) binding site. Thr-160 contacts ATP. Residue Glu-165 participates in Mg(2+) binding. Positions 173 and 180 each coordinate deamido-NAD(+). ATP-binding residues include Lys-189 and Thr-211. 260 to 261 (HK) is a deamido-NAD(+) binding site.

It belongs to the NAD synthetase family. In terms of assembly, homodimer.

It catalyses the reaction deamido-NAD(+) + NH4(+) + ATP = AMP + diphosphate + NAD(+) + H(+). It participates in cofactor biosynthesis; NAD(+) biosynthesis; NAD(+) from deamido-NAD(+) (ammonia route): step 1/1. Catalyzes the ATP-dependent amidation of deamido-NAD to form NAD. Uses ammonia as a nitrogen source. In Shigella boydii serotype 4 (strain Sb227), this protein is NH(3)-dependent NAD(+) synthetase.